Here is a 373-residue protein sequence, read N- to C-terminus: tRNA-specific 2-thiouridylase MnmA (373 aa).

Residues 12–19 and Met38 each bind ATP; that span reads GMSGGVDS. The interaction with target base in tRNA stretch occupies residues 98–100; sequence NPD. Cys103 (nucleophile) is an active-site residue. A disulfide bridge links Cys103 with Cys200. Residue Gly127 participates in ATP binding. The interaction with tRNA stretch occupies residues 150–152; sequence KDQ. The active-site Cysteine persulfide intermediate is the Cys200. The interaction with tRNA stretch occupies residues 312-313; that stretch reads RY.

Belongs to the MnmA/TRMU family.

The protein localises to the cytoplasm. The catalysed reaction is S-sulfanyl-L-cysteinyl-[protein] + uridine(34) in tRNA + AH2 + ATP = 2-thiouridine(34) in tRNA + L-cysteinyl-[protein] + A + AMP + diphosphate + H(+). Functionally, catalyzes the 2-thiolation of uridine at the wobble position (U34) of tRNA, leading to the formation of s(2)U34. The polypeptide is tRNA-specific 2-thiouridylase MnmA (Streptococcus uberis (strain ATCC BAA-854 / 0140J)).